The sequence spans 24 residues: Ascaphin-7 (24 aa).

In terms of tissue distribution, expressed by the skin glands.

The protein localises to the secreted. In terms of biological role, antimicrobial peptide that shows higher potency against Gram-negative bacteria than against Gram-positive bacteria. Has a very week hemolytic activity. The sequence is that of Ascaphin-7 from Ascaphus truei (Coastal tailed frog).